The sequence spans 272 residues: 2-dehydro-3-deoxyphosphooctonate aldolase (272 aa).

Belongs to the KdsA family.

It localises to the cytoplasm. It catalyses the reaction D-arabinose 5-phosphate + phosphoenolpyruvate + H2O = 3-deoxy-alpha-D-manno-2-octulosonate-8-phosphate + phosphate. Its pathway is carbohydrate biosynthesis; 3-deoxy-D-manno-octulosonate biosynthesis; 3-deoxy-D-manno-octulosonate from D-ribulose 5-phosphate: step 2/3. It participates in bacterial outer membrane biogenesis; lipopolysaccharide biosynthesis. This is 2-dehydro-3-deoxyphosphooctonate aldolase from Geobacter metallireducens (strain ATCC 53774 / DSM 7210 / GS-15).